Consider the following 129-residue polypeptide: Large-conductance mechanosensitive channel (129 aa).

3 helical membrane passes run 14–34 (IIDL…VTSL), 38–58 (IIMP…SFVY), and 67–87 (LGVF…IFMA).

The protein belongs to the MscL family. As to quaternary structure, homopentamer.

The protein localises to the cell membrane. Functionally, channel that opens in response to stretch forces in the membrane lipid bilayer. May participate in the regulation of osmotic pressure changes within the cell. This Lysinibacillus sphaericus (strain C3-41) protein is Large-conductance mechanosensitive channel.